The chain runs to 92 residues: Large ribosomal subunit protein eL43 (92 aa).

Zn(2+)-binding residues include C39, C42, C57, and C60. The C4-type zinc-finger motif lies at C39–C60.

The protein belongs to the eukaryotic ribosomal protein eL43 family. Putative zinc-binding subfamily. Part of the 50S ribosomal subunit. Contacts protein L2. The cofactor is Zn(2+).

Its function is as follows. Binds to the 23S rRNA. This Haloarcula marismortui (strain ATCC 43049 / DSM 3752 / JCM 8966 / VKM B-1809) (Halobacterium marismortui) protein is Large ribosomal subunit protein eL43.